Here is a 114-residue protein sequence, read N- to C-terminus: Protein LLP homolog (114 aa).

2 stretches are compositionally biased toward basic residues: residues Met1–Asn21 and Gln91–Leu108. Disordered regions lie at residues Met1–Pro23 and Gln91–Trp114.

It belongs to the learning-associated protein family.

The protein localises to the nucleus. It is found in the nucleolus. The protein resides in the chromosome. Regulates dendritic and spine growth and synaptic transmission. The protein is Protein LLP homolog (LLPH) of Gallus gallus (Chicken).